The following is a 201-amino-acid chain: Ras-related protein Rab-5A (201 aa).

Residues 16–24 (GEAAVGKSS), 35–41 (LDYQEST), 64–68 (DTAGQ), 122–125 (NKLD), and 152–154 (SAK) contribute to the GTP site. Residues 38 to 46 (QESTIGAAF) carry the Effector region motif. Residues Cys-199 and Cys-200 are each lipidated (S-geranylgeranyl cysteine).

The protein belongs to the small GTPase superfamily. Rab family.

Its subcellular location is the cell membrane. It localises to the endosome membrane. Its activity is regulated as follows. Regulated by guanine nucleotide exchange factors (GEFs) which promote the exchange of bound GDP for free GTP. Required for the fusion of plasma membranes and early endosomes. This is Ras-related protein Rab-5A (rab5A) from Dictyostelium discoideum (Social amoeba).